We begin with the raw amino-acid sequence, 472 residues long: N(6)-adenine-specific methyltransferase METTL4 (472 aa).

The protein belongs to the MT-A70-like family.

It is found in the nucleus. Its subcellular location is the cytoplasm. The protein localises to the cytosol. It localises to the mitochondrion matrix. The catalysed reaction is a 2'-O-methyladenosine in U2 snRNA + S-adenosyl-L-methionine = an N(6)-methyl-2'-O-methyladenosine in U2 snRNA + S-adenosyl-L-homocysteine + H(+). It carries out the reaction a 2'-deoxyadenosine in DNA + S-adenosyl-L-methionine = an N(6)-methyl-2'-deoxyadenosine in DNA + S-adenosyl-L-homocysteine + H(+). Functionally, n(6)-adenine-specific methyltransferase that can methylate both RNAs and DNA. Acts as a N(6)-adenine-specific RNA methyltransferase by catalyzing formation of N6,2'-O-dimethyladenosine (m6A(m)) on internal positions of U2 small nuclear RNA (snRNA): methylates the 6th position of adenine residues with a pre-deposited 2'-O-methylation. Internal m6A(m) methylation of snRNAs regulates RNA splicing. Also able to act as a N(6)-adenine-specific DNA methyltransferase by mediating methylation of DNA on the 6th position of adenine (N(6)-methyladenosine). The existence of N(6)-methyladenosine (m6A) on DNA is however unclear in mammals, and additional evidences are required to confirm the role of the N(6)-adenine-specific DNA methyltransferase activity of METTL4 in vivo. Acts as a regulator of mitochondrial transcript levels and mitochondrial DNA (mtDNA) copy number by mediating mtDNA N(6)-methylation: m6A on mtDNA reduces transcription by repressing TFAM DNA-binding and bending. N(6)-methyladenosine deposition by METTL4 regulates Polycomb silencing by triggering ubiquitination and degradation of sensor proteins ASXL1 and MPND, leading to inactivation of the PR-DUB complex and subsequent preservation of Polycomb silencing. The protein is N(6)-adenine-specific methyltransferase METTL4 of Homo sapiens (Human).